The primary structure comprises 119 residues: Large ribosomal subunit protein uL18 (119 aa).

Positions 1 to 25 (MITKIDKNKVRKKRHARVRSKISGT) are disordered. The span at 9–20 (KVRKKRHARVRS) shows a compositional bias: basic residues.

It belongs to the universal ribosomal protein uL18 family. Part of the 50S ribosomal subunit; part of the 5S rRNA/L5/L18/L25 subcomplex. Contacts the 5S and 23S rRNAs.

In terms of biological role, this is one of the proteins that bind and probably mediate the attachment of the 5S RNA into the large ribosomal subunit, where it forms part of the central protuberance. The protein is Large ribosomal subunit protein uL18 of Listeria monocytogenes serotype 4b (strain CLIP80459).